The following is a 312-amino-acid chain: UPF0725 protein At3g19520 (312 aa).

It belongs to the UPF0725 (EMB2204) family.

This chain is UPF0725 protein At3g19520, found in Arabidopsis thaliana (Mouse-ear cress).